The chain runs to 480 residues: Uridine 5'-monophosphate synthase (480 aa).

A2 bears the N-acetylalanine mark. The segment at 2-214 is OPRTase; it reads AAVGAALGPL…VFVAANHNGS (213 aa). Residue Y37 is modified to Phosphotyrosine. Position 214 is a phosphoserine (S214). The segment at 215 to 220 is domain linker; the sequence is PLSIKE. The interval 221–480 is OMPdecase; sequence APKELSFSAR…WEAYLSRLGV (260 aa). S257 serves as a coordination point for orotidine 5'-phosphate. UMP-binding positions include S257, D259, and 281 to 283; that span reads KTH. Residues K281, K314, D317, T321, S372, 430-432, and 450-451 contribute to the orotidine 5'-phosphate site; these read QQY and GR. Active-site for OMPdecase activity residues include K314 and D317. Residues D317, T321, S372, 430-432, and 450-451 contribute to the UMP site; these read QQY and GR.

This sequence in the N-terminal section; belongs to the purine/pyrimidine phosphoribosyltransferase family. In the C-terminal section; belongs to the OMP decarboxylase family. In terms of assembly, homodimer; dimerization is required for enzymatic activity.

It catalyses the reaction orotidine 5'-phosphate + diphosphate = orotate + 5-phospho-alpha-D-ribose 1-diphosphate. It carries out the reaction orotidine 5'-phosphate + H(+) = UMP + CO2. The protein operates within pyrimidine metabolism; UMP biosynthesis via de novo pathway; UMP from orotate: step 1/2. It functions in the pathway pyrimidine metabolism; UMP biosynthesis via de novo pathway; UMP from orotate: step 2/2. Functionally, bifunctional enzyme catalyzing the last two steps of de novo pyrimidine biosynthesis, orotate phosphoribosyltransferase (OPRT), which converts orotate to orotidine-5'-monophosphate (OMP), and orotidine-5'-monophosphate decarboxylase (ODC), the terminal enzymatic reaction that decarboxylates OMP to uridine monophosphate (UMP). The chain is Uridine 5'-monophosphate synthase (UMPS) from Pongo abelii (Sumatran orangutan).